Consider the following 270-residue polypeptide: tRNA pseudouridine synthase A (270 aa).

Aspartate 60 acts as the Nucleophile in catalysis. The tract at residues 107-111 (FHARF) is RNA binding. Tyrosine 118 contributes to the substrate binding site. The interaction with tRNA stretch occupies residues 168–172 (QCQSR).

The protein belongs to the tRNA pseudouridine synthase TruA family. As to quaternary structure, homodimer.

It carries out the reaction uridine(38/39/40) in tRNA = pseudouridine(38/39/40) in tRNA. In terms of biological role, formation of pseudouridine at positions 38, 39 and 40 in the anticodon stem and loop of transfer RNAs. The protein is tRNA pseudouridine synthase A of Shigella boydii serotype 18 (strain CDC 3083-94 / BS512).